The sequence spans 428 residues: Gamma-glutamyl phosphate reductase (428 aa).

This sequence belongs to the gamma-glutamyl phosphate reductase family.

The protein localises to the cytoplasm. It carries out the reaction L-glutamate 5-semialdehyde + phosphate + NADP(+) = L-glutamyl 5-phosphate + NADPH + H(+). Its pathway is amino-acid biosynthesis; L-proline biosynthesis; L-glutamate 5-semialdehyde from L-glutamate: step 2/2. Functionally, catalyzes the NADPH-dependent reduction of L-glutamate 5-phosphate into L-glutamate 5-semialdehyde and phosphate. The product spontaneously undergoes cyclization to form 1-pyrroline-5-carboxylate. The polypeptide is Gamma-glutamyl phosphate reductase (Agrobacterium fabrum (strain C58 / ATCC 33970) (Agrobacterium tumefaciens (strain C58))).